The sequence spans 142 residues: Large ribosomal subunit protein uL13 (142 aa).

It belongs to the universal ribosomal protein uL13 family. In terms of assembly, part of the 50S ribosomal subunit.

This protein is one of the early assembly proteins of the 50S ribosomal subunit, although it is not seen to bind rRNA by itself. It is important during the early stages of 50S assembly. In Stutzerimonas stutzeri (strain A1501) (Pseudomonas stutzeri), this protein is Large ribosomal subunit protein uL13.